We begin with the raw amino-acid sequence, 176 residues long: Ribosome maturation factor RimM (176 aa).

The PRC barrel domain maps to 99-174 (KDEFYVRDLI…IVLIQPELWN (76 aa)).

The protein belongs to the RimM family. In terms of assembly, binds ribosomal protein uS19.

It is found in the cytoplasm. Its function is as follows. An accessory protein needed during the final step in the assembly of 30S ribosomal subunit, possibly for assembly of the head region. Essential for efficient processing of 16S rRNA. May be needed both before and after RbfA during the maturation of 16S rRNA. It has affinity for free ribosomal 30S subunits but not for 70S ribosomes. This Leptospira borgpetersenii serovar Hardjo-bovis (strain JB197) protein is Ribosome maturation factor RimM.